Consider the following 378-residue polypeptide: 1-acyl-sn-glycerol-3-phosphate acyltransferase delta (378 aa).

The helical transmembrane segment at 11-31 (FLCHLVFCYVFIASGLIVNAI) threads the bilayer. The HXXXXD motif signature appears at 96–101 (HKFEID). 3 helical membrane passes run 125 to 145 (ELAYVPIIGWMWYFVEMIFCT), 311 to 331 (WLFWASLLLYPFFQFLVSMVS), and 338 to 358 (LASLVLIFCMASMGVRWMIGV).

Belongs to the 1-acyl-sn-glycerol-3-phosphate acyltransferase family. Expressed at a high levels in the brain, at intermediate or low levels in skeletal muscles, gut, kidney, spleen and lung. Barely detectable in heart and liver.

Its subcellular location is the endoplasmic reticulum membrane. The enzyme catalyses a 1-acyl-sn-glycero-3-phosphate + an acyl-CoA = a 1,2-diacyl-sn-glycero-3-phosphate + CoA. It carries out the reaction (4Z,7Z,10Z,13Z,16Z,19Z)-docosahexaenoyl-CoA + 1-hexadecanoyl-sn-glycero-3-phosphate = 1-hexadecanoyl-2-(4Z,7Z,10Z,13Z,16Z,19Z-docosahexaenoyl)-sn-glycero-3-phosphate + CoA. The catalysed reaction is 1-octadecanoyl-sn-glycero-3-phosphate + (9Z,12Z)-octadecadienoyl-CoA = 1-octadecanoyl-2-(9Z,12Z-octadecadienoyl)-sn-glycero-3-phosphate + CoA. It catalyses the reaction 1-octadecanoyl-sn-glycero-3-phosphate + (4Z,7Z,10Z,13Z,16Z,19Z)-docosahexaenoyl-CoA = 1-octadecanoyl-2-(4Z,7Z,10Z,13Z,16Z,19Z-docosahexaenoyl)-sn-glycero-3-phosphate + CoA. The enzyme catalyses (4Z,7Z,10Z,13Z,16Z,19Z)-docosahexaenoyl-CoA + 1-(9Z-octadecenoyl)-sn-glycero-3-phosphate = 1-(9Z-octadecenoyl)-2-(4Z,7Z,10Z,13Z,16Z,19Z-docosahexaenoyl)-sn-glycero-3-phosphate + CoA. It participates in phospholipid metabolism; CDP-diacylglycerol biosynthesis; CDP-diacylglycerol from sn-glycerol 3-phosphate: step 2/3. Its function is as follows. Converts 1-acyl-sn-glycerol-3-phosphate (lysophosphatidic acid or LPA) into 1,2-diacyl-sn-glycerol-3-phosphate (phosphatidic acid or PA) by incorporating an acyl moiety at the sn-2 position of the glycerol backbone. Exhibits high acyl-CoA specificity for polyunsaturated fatty acyl-CoA, especially docosahexaenoyl-CoA (22:6-CoA, DHA-CoA). In Mus musculus (Mouse), this protein is 1-acyl-sn-glycerol-3-phosphate acyltransferase delta (Agpat4).